The following is a 173-amino-acid chain: Ribulose bisphosphate carboxylase small subunit, chloroplastic 1 (173 aa).

The transit peptide at 1–52 directs the protein to the chloroplast; that stretch reads MMVSTAAVARVRPAQTNMVGAFNGCRSSVAFPATRKANNDLSTLPSSGGRVS.

The protein belongs to the RuBisCO small chain family. In terms of assembly, heterohexadecamer of 8 large and 8 small subunits.

It localises to the plastid. Its subcellular location is the chloroplast. Functionally, ruBisCO catalyzes two reactions: the carboxylation of D-ribulose 1,5-bisphosphate, the primary event in carbon dioxide fixation, as well as the oxidative fragmentation of the pentose substrate. Both reactions occur simultaneously and in competition at the same active site. Although the small subunit is not catalytic it is essential for maximal activity. This is Ribulose bisphosphate carboxylase small subunit, chloroplastic 1 from Lemna gibba (Swollen duckweed).